Consider the following 509-residue polypeptide: Maturase K (509 aa).

This sequence belongs to the intron maturase 2 family. MatK subfamily.

Its subcellular location is the plastid. It is found in the chloroplast. In terms of biological role, usually encoded in the trnK tRNA gene intron. Probably assists in splicing its own and other chloroplast group II introns. The chain is Maturase K from Anthocercis angustifolia (Narrow-leaf ray-flower).